We begin with the raw amino-acid sequence, 246 residues long: tRNA pseudouridine synthase A (246 aa).

The active-site Nucleophile is the aspartate 52. Position 111 (tyrosine 111) interacts with substrate.

This sequence belongs to the tRNA pseudouridine synthase TruA family. As to quaternary structure, homodimer.

The catalysed reaction is uridine(38/39/40) in tRNA = pseudouridine(38/39/40) in tRNA. Formation of pseudouridine at positions 38, 39 and 40 in the anticodon stem and loop of transfer RNAs. This Parvibaculum lavamentivorans (strain DS-1 / DSM 13023 / NCIMB 13966) protein is tRNA pseudouridine synthase A.